Reading from the N-terminus, the 578-residue chain is CTP synthase 2 (578 aa).

The 254-residue stretch at 300–553 (SIALVGKYTK…MLAASGKLNT (254 aa)) folds into the Glutamine amidotransferase type-1 domain. Catalysis depends on for GATase activity residues cysteine 399, histidine 526, and glutamate 528.

This sequence belongs to the CTP synthase family.

It carries out the reaction UTP + L-glutamine + ATP + H2O = CTP + L-glutamate + ADP + phosphate + 2 H(+). The protein operates within pyrimidine metabolism; CTP biosynthesis via de novo pathway; CTP from UDP: step 2/2. In terms of biological role, catalyzes the ATP-dependent amination of UTP to CTP with either L-glutamine or ammonia as the source of nitrogen. Constitutes the rate-limiting enzyme in the synthesis of cytosine nucleotides. This Xenopus laevis (African clawed frog) protein is CTP synthase 2 (ctps2).